The sequence spans 571 residues: Membrane protein insertase YidC (571 aa).

The helical transmembrane segment at 4-24 (TRVFLIFAWLMVAVLLWMEWS) threads the bilayer. The disordered stretch occupies residues 29–76 (APTPAPTTTSAPAAAQSVPGATPGSVPNAQVPGAPGQAAVQAQASATP). Low complexity-rich tracts occupy residues 34-43 (PTTTSAPAAA) and 57-76 (AQVP…SATP). The next 4 membrane-spanning stretches (helical) occupy residues 369 to 389 (LVGN…LVLY), 440 to 460 (GGCL…WVLV), 483 to 503 (YFIL…LTPA), and 518 to 538 (PLVF…YWVV).

It belongs to the OXA1/ALB3/YidC family. Type 1 subfamily. As to quaternary structure, interacts with the Sec translocase complex via SecD. Specifically interacts with transmembrane segments of nascent integral membrane proteins during membrane integration.

It localises to the cell inner membrane. Its function is as follows. Required for the insertion and/or proper folding and/or complex formation of integral membrane proteins into the membrane. Involved in integration of membrane proteins that insert both dependently and independently of the Sec translocase complex, as well as at least some lipoproteins. Aids folding of multispanning membrane proteins. This is Membrane protein insertase YidC from Stenotrophomonas maltophilia (strain R551-3).